The primary structure comprises 55 residues: Large ribosomal subunit protein bL33C (55 aa).

The protein belongs to the bacterial ribosomal protein bL33 family.

The polypeptide is Large ribosomal subunit protein bL33C (Kineococcus radiotolerans (strain ATCC BAA-149 / DSM 14245 / SRS30216)).